Consider the following 508-residue polypeptide: Pentatricopeptide repeat-containing protein At5g48730, chloroplastic (508 aa).

Positions 1-10 (MVSLSTSTSH) are enriched in polar residues. The disordered stretch occupies residues 1–22 (MVSLSTSTSHAPPLPTNRRTAE). A chloroplast-targeting transit peptide spans 1 to 28 (MVSLSTSTSHAPPLPTNRRTAERTFTVR). 10 PPR repeats span residues 149 to 183 (NVGI…GCVV), 184 to 214 (NHEV…MKSS), 220 to 254 (DVHT…GIRP), 255 to 290 (NTIT…DCKP), 291 to 325 (DSWT…GIEP), 326 to 360 (NIRT…HYSW), 361 to 395 (TIVT…RIFP), 396 to 430 (SCVT…DIRL), 431 to 465 (DLVF…GFKP), and 466 to 500 (DKIT…GEAQ).

Belongs to the PPR family. P subfamily.

The protein resides in the plastid. It is found in the chloroplast. The protein is Pentatricopeptide repeat-containing protein At5g48730, chloroplastic of Arabidopsis thaliana (Mouse-ear cress).